Consider the following 231-residue polypeptide: Coproheme decarboxylase (231 aa).

An Isoglutamyl lysine isopeptide (Lys-Gln) (interchain with Q-Cter in protein Pup) cross-link involves residue K44. Y133 is an active-site residue. Residue H156 participates in Fe-coproporphyrin III binding.

It belongs to the ChdC family. Type 2 subfamily. It depends on Fe-coproporphyrin III as a cofactor.

The catalysed reaction is Fe-coproporphyrin III + 2 H2O2 + 2 H(+) = heme b + 2 CO2 + 4 H2O. It catalyses the reaction Fe-coproporphyrin III + H2O2 + H(+) = harderoheme III + CO2 + 2 H2O. It carries out the reaction harderoheme III + H2O2 + H(+) = heme b + CO2 + 2 H2O. Its pathway is porphyrin-containing compound metabolism; protoheme biosynthesis. In terms of biological role, involved in coproporphyrin-dependent heme b biosynthesis. Catalyzes the decarboxylation of Fe-coproporphyrin III (coproheme) to heme b (protoheme IX), the last step of the pathway. The reaction occurs in a stepwise manner with a three-propionate intermediate. In Mycolicibacterium smegmatis (strain ATCC 700084 / mc(2)155) (Mycobacterium smegmatis), this protein is Coproheme decarboxylase.